A 445-amino-acid polypeptide reads, in one-letter code: Trigger factor (445 aa).

A PPIase FKBP-type domain is found at 162–247 (GDQVTIDAIG…IKAVHTAEPT (86 aa)).

The protein belongs to the FKBP-type PPIase family. Tig subfamily.

The protein resides in the cytoplasm. It catalyses the reaction [protein]-peptidylproline (omega=180) = [protein]-peptidylproline (omega=0). Involved in protein export. Acts as a chaperone by maintaining the newly synthesized protein in an open conformation. Functions as a peptidyl-prolyl cis-trans isomerase. The sequence is that of Trigger factor from Rickettsia massiliae (strain Mtu5).